The sequence spans 62 residues: MKTLVLFIIFGLAALFLLSSATELEETERGCQKFFWTCHPGQPPCCSGLACTWPTEICILGR.

The first 21 residues, 1 to 21 (MKTLVLFIIFGLAALFLLSSA), serve as a signal peptide directing secretion. The propeptide occupies 22 to 29 (TELEETER). Intrachain disulfides connect cysteine 31–cysteine 46, cysteine 38–cysteine 51, and cysteine 45–cysteine 58.

Belongs to the neurotoxin 10 (Hwtx-1) family. 30 (Jztx-14) subfamily. Expressed by the venom gland.

It localises to the secreted. Functionally, probable ion channel inhibitor. This Chilobrachys guangxiensis (Chinese earth tiger tarantula) protein is U8-theraphotoxin-Cg1a 2.